We begin with the raw amino-acid sequence, 227 residues long: Urease subunit gamma/beta (227 aa).

The urease gamma stretch occupies residues 1–101 (MRLTPTERDR…LAVVADPVGG (101 aa)). A urease beta region spans residues 102–227 (GGLGDDAPGA…AACGYLGADR (126 aa)).

The protein in the N-terminal section; belongs to the urease gamma subunit family. This sequence in the C-terminal section; belongs to the urease beta subunit family. In terms of assembly, heterohexamer of 3 UreC (alpha) and 3 UreAB (gamma/beta) subunits.

It is found in the cytoplasm. The enzyme catalyses urea + 2 H2O + H(+) = hydrogencarbonate + 2 NH4(+). Its pathway is nitrogen metabolism; urea degradation; CO(2) and NH(3) from urea (urease route): step 1/1. In Streptomyces coelicolor (strain ATCC BAA-471 / A3(2) / M145), this protein is Urease subunit gamma/beta.